The primary structure comprises 276 residues: Ribosomal RNA small subunit methyltransferase A (276 aa).

S-adenosyl-L-methionine-binding residues include Asn27, Leu29, Gly54, Glu75, Asp101, and Asn123.

The protein belongs to the class I-like SAM-binding methyltransferase superfamily. rRNA adenine N(6)-methyltransferase family. RsmA subfamily.

It is found in the cytoplasm. It catalyses the reaction adenosine(1518)/adenosine(1519) in 16S rRNA + 4 S-adenosyl-L-methionine = N(6)-dimethyladenosine(1518)/N(6)-dimethyladenosine(1519) in 16S rRNA + 4 S-adenosyl-L-homocysteine + 4 H(+). Its function is as follows. Specifically dimethylates two adjacent adenosines (A1518 and A1519) in the loop of a conserved hairpin near the 3'-end of 16S rRNA in the 30S particle. May play a critical role in biogenesis of 30S subunits. The chain is Ribosomal RNA small subunit methyltransferase A from Bartonella bacilliformis (strain ATCC 35685 / KC583 / Herrer 020/F12,63).